Consider the following 422-residue polypeptide: Lipase member M (422 aa).

The first 33 residues, 1-33, serve as a signal peptide directing secretion; sequence MSEILSRVWTVSHRVEIWLLILVAYLLQRNVNS. Asn48 carries N-linked (GlcNAc...) asparagine glycosylation. In terms of domain architecture, AB hydrolase-1 spans 92 to 392; the sequence is PVVLLQHGLL…EWAHVDFIWG (301 aa). Ser186 serves as the catalytic Nucleophile. Cys260 and Cys269 are oxidised to a cystine. Active-site charge relay system residues include Asp357 and His386.

The protein belongs to the AB hydrolase superfamily. Lipase family.

Its subcellular location is the secreted. Plays a highly specific role in the last step of keratinocyte differentiation. May have an essential function in lipid metabolism of the most differentiated epidermal layers. The chain is Lipase member M (Lipm) from Mus musculus (Mouse).